Here is a 313-residue protein sequence, read N- to C-terminus: Aspartate carbamoyltransferase catalytic subunit (313 aa).

Positions 58 and 59 each coordinate carbamoyl phosphate. K86 contacts L-aspartate. Residues R108, H136, and Q139 each coordinate carbamoyl phosphate. Residues R169 and R223 each coordinate L-aspartate. Carbamoyl phosphate is bound by residues G264 and P265.

This sequence belongs to the aspartate/ornithine carbamoyltransferase superfamily. ATCase family. As to quaternary structure, heterododecamer (2C3:3R2) of six catalytic PyrB chains organized as two trimers (C3), and six regulatory PyrI chains organized as three dimers (R2).

The enzyme catalyses carbamoyl phosphate + L-aspartate = N-carbamoyl-L-aspartate + phosphate + H(+). The protein operates within pyrimidine metabolism; UMP biosynthesis via de novo pathway; (S)-dihydroorotate from bicarbonate: step 2/3. Functionally, catalyzes the condensation of carbamoyl phosphate and aspartate to form carbamoyl aspartate and inorganic phosphate, the committed step in the de novo pyrimidine nucleotide biosynthesis pathway. The sequence is that of Aspartate carbamoyltransferase catalytic subunit from Chlorobium luteolum (strain DSM 273 / BCRC 81028 / 2530) (Pelodictyon luteolum).